Reading from the N-terminus, the 230-residue chain is Lipoprotein-releasing system ATP-binding protein LolD (230 aa).

The region spanning 10–228 (LRAEHLSKVY…QLHMANGRLL (219 aa)) is the ABC transporter domain. 46-53 (GASGSGKS) provides a ligand contact to ATP.

It belongs to the ABC transporter superfamily. Lipoprotein translocase (TC 3.A.1.125) family. The complex is composed of two ATP-binding proteins (LolD) and two transmembrane proteins (LolC and LolE).

It localises to the cell inner membrane. Functionally, part of the ABC transporter complex LolCDE involved in the translocation of mature outer membrane-directed lipoproteins, from the inner membrane to the periplasmic chaperone, LolA. Responsible for the formation of the LolA-lipoprotein complex in an ATP-dependent manner. This chain is Lipoprotein-releasing system ATP-binding protein LolD, found in Bordetella avium (strain 197N).